The chain runs to 1040 residues: Multidrug resistance protein MdtB (1040 aa).

12 helical membrane passes run 16 to 36, 347 to 367, 369 to 389, 396 to 416, 440 to 460, 472 to 492, 537 to 557, 863 to 883, 888 to 908, 911 to 931, 968 to 988, and 998 to 1018; these read FIMR…AGII, LMMA…NIPA, IIPG…MVFL, LTLM…IVVI, IGFT…PLLF, FAIT…TLTP, WLTL…WVFI, LGST…VLGI, FIHP…ALLA, IAGS…IGIV, ILMT…STGV, and IGMV…TPVI.

This sequence belongs to the resistance-nodulation-cell division (RND) (TC 2.A.6) family. MdtB subfamily. As to quaternary structure, part of a tripartite efflux system composed of MdtA, MdtB and MdtC. MdtB forms a heteromultimer with MdtC.

The protein resides in the cell inner membrane. Its function is as follows. The MdtABC tripartite complex confers resistance against novobiocin and deoxycholate. The sequence is that of Multidrug resistance protein MdtB from Escherichia coli (strain 55989 / EAEC).